The primary structure comprises 41 residues: Pi-stichotoxin-Hcr5c (41 aa).

Cystine bridges form between cysteine 4-cysteine 37, cysteine 6-cysteine 30, and cysteine 20-cysteine 38.

The protein belongs to the sea anemone type 3 (BDS) potassium channel toxin family.

The protein resides in the secreted. The protein localises to the nematocyst. Weakly and reversibly inhibits rat homomeric ASIC1 (isoform ASIC1a) (IC(50)=4.95 uM), and ASIC3 (IC(50)=17 uM). ASIC1a current inhibition and ASIC3 transient current inhibition are not complete, and reach a maximum of 70% inhibition and 80%, respectively. The polypeptide is Pi-stichotoxin-Hcr5c (Radianthus crispa (Leathery sea anemone)).